A 432-amino-acid chain; its full sequence is Adenylosuccinate synthetase (432 aa).

Residues 12-18 (GDEGKGK) and 40-42 (GHT) contribute to the GTP site. The active-site Proton acceptor is the Asp13. The Mg(2+) site is built by Asp13 and Gly40. IMP is bound by residues 13 to 16 (DEGK), 38 to 41 (NAGH), Thr132, Arg146, Gln226, Thr241, and Arg305. The active-site Proton donor is the His41. Residue 301–307 (VVTGRKR) participates in substrate binding. GTP-binding positions include Arg307, 333 to 335 (KLD), and 415 to 417 (STS).

The protein belongs to the adenylosuccinate synthetase family. Homodimer. Requires Mg(2+) as cofactor.

It is found in the cytoplasm. It carries out the reaction IMP + L-aspartate + GTP = N(6)-(1,2-dicarboxyethyl)-AMP + GDP + phosphate + 2 H(+). It functions in the pathway purine metabolism; AMP biosynthesis via de novo pathway; AMP from IMP: step 1/2. Its function is as follows. Plays an important role in the de novo pathway of purine nucleotide biosynthesis. Catalyzes the first committed step in the biosynthesis of AMP from IMP. The polypeptide is Adenylosuccinate synthetase (Rhizobium etli (strain CIAT 652)).